A 349-amino-acid chain; its full sequence is Glycerol-3-phosphate dehydrogenase [NAD(+)], cytoplasmic (349 aa).

Residue 10 to 15 participates in NAD(+) binding; the sequence is GSGNWG. K120 is a substrate binding site. Residue A153 coordinates NAD(+). S154 bears the Phosphoserine mark. The Proton acceptor role is filled by K204. Residue R269 coordinates NAD(+). 269-270 is a substrate binding site; that stretch reads RN. Position 289 is an N6-succinyllysine (K289). The NAD(+) site is built by K296 and Q298. Y326 is modified (phosphotyrosine).

It belongs to the NAD-dependent glycerol-3-phosphate dehydrogenase family. Homodimer.

The protein localises to the cytoplasm. The enzyme catalyses sn-glycerol 3-phosphate + NAD(+) = dihydroxyacetone phosphate + NADH + H(+). Functionally, has glycerol-3-phosphate dehydrogenase activity. This chain is Glycerol-3-phosphate dehydrogenase [NAD(+)], cytoplasmic, found in Rattus norvegicus (Rat).